The chain runs to 1193 residues: Structural maintenance of chromosomes protein 3 homolog (1193 aa).

Position 31–38 (31–38 (GFNGSGKS)) interacts with ATP. The residue at position 101 (Lys101) is an N6-acetyllysine. Coiled coils occupy residues 179–286 (SKKV…LNKT) and 332–483 (ILRV…EIIK). The region spanning 505-631 (ENILGFLIDN…VKSLESCENY (127 aa)) is the SMC hinge domain. A coiled-coil region spans residues 665–993 (TVYNKLKELK…SHKNIKDMIQ (329 aa)).

The protein belongs to the SMC family. SMC3 subfamily. As to quaternary structure, component of the cohesin complex. Post-translationally, acetylation at Lys-101 by ESCO1 is important for genome stability and S phase sister chromatid cohesion.

It localises to the nucleus. Its function is as follows. Central component of cohesin, a complex required for chromosome cohesion during the cell cycle. The cohesin complex may form a large proteinaceous ring within which sister chromatids can be trapped. At anaphase, the complex is cleaved and dissociates from chromatin, allowing sister chromatids to segregate. Cohesion is coupled to DNA replication and is involved in DNA repair. The cohesin complex also plays an important role in spindle pole assembly during mitosis and in chromosomes movement. This is Structural maintenance of chromosomes protein 3 homolog from Plasmodium falciparum (isolate 3D7).